Consider the following 402-residue polypeptide: Flavohemoprotein (402 aa).

The Globin domain occupies methionine 1 to alanine 136. Histidine 85 serves as a coordination point for heme b. Residues tyrosine 95 and glutamate 135 each act as charge relay system in the active site. The tract at residues glycine 147–glutamine 402 is reductase. The 111-residue stretch at lysine 150 to asparagine 260 folds into the FAD-binding FR-type domain. FAD is bound by residues tyrosine 188 and arginine 204 to serine 207. Residue glycine 273 to proline 278 coordinates NADP(+). Phenylalanine 394 to proline 397 contributes to the FAD binding site.

It belongs to the globin family. Two-domain flavohemoproteins subfamily. This sequence in the C-terminal section; belongs to the flavoprotein pyridine nucleotide cytochrome reductase family. The cofactor is heme b. FAD is required as a cofactor.

The enzyme catalyses 2 nitric oxide + NADPH + 2 O2 = 2 nitrate + NADP(+) + H(+). The catalysed reaction is 2 nitric oxide + NADH + 2 O2 = 2 nitrate + NAD(+) + H(+). Is involved in NO detoxification in an aerobic process, termed nitric oxide dioxygenase (NOD) reaction that utilizes O(2) and NAD(P)H to convert NO to nitrate, which protects the bacterium from various noxious nitrogen compounds. Therefore, plays a central role in the inducible response to nitrosative stress. In Bacillus cereus (strain ATCC 10987 / NRS 248), this protein is Flavohemoprotein.